Reading from the N-terminus, the 366-residue chain is MKFNDYVENLQNYEAGKPVELVVREYGVKEDDVIKLASNENPLGTGKKAVKAIYKMAKHANLYPDDSMFELKGALADKYGVSEKNVIIGAGSDQIIEFLIHAKCNENNGILTAGTTFSMYGIYAKHAKAKHFSTASKFHDLKEIKELYESHKDEISVIFLCVPNNPLGECLDAKDVIKFIKSIDDDTLVVIDAAYNEFASFKDKHKHIEPAEIVKLKNAIYLGTFSKVYGLGGLRVGYGVADEKIISALYKLRPPFNVANLSLAAAVAALQDKKFIEKTIKNNFKEMKKYEKFANATGIKFIKSYTNFITFILDESKKSSEISQKLLEKGLIVRDLKGYGLNAIRITVGLPKQNKRIFDELRKLLG.

At K227 the chain carries N6-(pyridoxal phosphate)lysine.

This sequence belongs to the class-II pyridoxal-phosphate-dependent aminotransferase family. Histidinol-phosphate aminotransferase subfamily. As to quaternary structure, homodimer. Pyridoxal 5'-phosphate is required as a cofactor.

The catalysed reaction is L-histidinol phosphate + 2-oxoglutarate = 3-(imidazol-4-yl)-2-oxopropyl phosphate + L-glutamate. The protein operates within amino-acid biosynthesis; L-histidine biosynthesis; L-histidine from 5-phospho-alpha-D-ribose 1-diphosphate: step 7/9. In Campylobacter hominis (strain ATCC BAA-381 / DSM 21671 / CCUG 45161 / LMG 19568 / NCTC 13146 / CH001A), this protein is Histidinol-phosphate aminotransferase.